We begin with the raw amino-acid sequence, 302 residues long: Cyclin-C (302 aa).

In terms of domain architecture, Cyclin N-terminal spans 46 to 152; the sequence is NFITAVATEG…VYDSEFILVE (107 aa). Positions 281 to 302 are disordered; that stretch reads LPKPNQQPPPQQQHQHQQGYHL. The segment covering 292 to 302 has biased composition (low complexity); that stretch reads QQHQHQQGYHL.

This sequence belongs to the cyclin family. Cyclin C subfamily. As to quaternary structure, component of the Mediator complex.

The protein resides in the nucleus. Its function is as follows. Component of the Mediator complex, a coactivator involved in regulated gene transcription of nearly all RNA polymerase II-dependent genes. Mediator functions as a bridge to convey information from gene-specific regulatory proteins to the basal RNA polymerase II transcription machinery. Mediator is recruited to promoters by direct interactions with regulatory proteins and serves as a scaffold for the assembly of a functional preinitiation complex with RNA polymerase II and the general transcription factors. Binds to and activates cyclin-dependent kinase cdk-8 that phosphorylates the CTD (C-terminal domain) of the large subunit of RNA polymerase II (RNAp II), which may inhibit the formation of a transcription initiation complex. In Caenorhabditis elegans, this protein is Cyclin-C (cic-1).